The primary structure comprises 119 residues: Large ribosomal subunit protein bL20 (119 aa).

Belongs to the bacterial ribosomal protein bL20 family.

Binds directly to 23S ribosomal RNA and is necessary for the in vitro assembly process of the 50S ribosomal subunit. It is not involved in the protein synthesizing functions of that subunit. The polypeptide is Large ribosomal subunit protein bL20 (Bordetella avium (strain 197N)).